A 450-amino-acid chain; its full sequence is UDP-N-acetylmuramoylalanine--D-glutamate ligase (450 aa).

119 to 125 (GSNGKTT) contacts ATP.

It belongs to the MurCDEF family.

It is found in the cytoplasm. The catalysed reaction is UDP-N-acetyl-alpha-D-muramoyl-L-alanine + D-glutamate + ATP = UDP-N-acetyl-alpha-D-muramoyl-L-alanyl-D-glutamate + ADP + phosphate + H(+). Its pathway is cell wall biogenesis; peptidoglycan biosynthesis. Cell wall formation. Catalyzes the addition of glutamate to the nucleotide precursor UDP-N-acetylmuramoyl-L-alanine (UMA). This Streptococcus pneumoniae (strain P1031) protein is UDP-N-acetylmuramoylalanine--D-glutamate ligase.